The sequence spans 854 residues: Translation initiation factor IF-2 (854 aa).

Basic residues predominate over residues 61 to 72 (KNIKTPTAKKPK). 2 disordered regions span residues 61 to 115 (KNIK…LASA) and 167 to 186 (ESLK…KKES). The segment covering 73-108 (KENAKDQEKLNESEKKEPKKEESKEQEKQEIIDTHK) has biased composition (basic and acidic residues). The region spanning 353-520 (TRAPVITIMG…IVLLQADILE (168 aa)) is the tr-type G domain. The tract at residues 362 to 369 (GHVDHGKT) is G1. 362–369 (GHVDHGKT) is a GTP binding site. Positions 387–391 (GITQH) are G2. The tract at residues 408–411 (DTPG) is G3. GTP contacts are provided by residues 408 to 412 (DTPGH) and 462 to 465 (NKMD). The interval 462–465 (NKMD) is G4. The segment at 498–500 (SAK) is G5.

This sequence belongs to the TRAFAC class translation factor GTPase superfamily. Classic translation factor GTPase family. IF-2 subfamily.

The protein localises to the cytoplasm. In terms of biological role, one of the essential components for the initiation of protein synthesis. Protects formylmethionyl-tRNA from spontaneous hydrolysis and promotes its binding to the 30S ribosomal subunits. Also involved in the hydrolysis of GTP during the formation of the 70S ribosomal complex. This Campylobacter jejuni subsp. doylei (strain ATCC BAA-1458 / RM4099 / 269.97) protein is Translation initiation factor IF-2.